The following is a 139-amino-acid chain: Holo-[acyl-carrier-protein] synthase (139 aa).

Mg(2+) contacts are provided by D8 and E61.

The protein belongs to the P-Pant transferase superfamily. AcpS family. Mg(2+) is required as a cofactor.

The protein resides in the cytoplasm. The enzyme catalyses apo-[ACP] + CoA = holo-[ACP] + adenosine 3',5'-bisphosphate + H(+). Its function is as follows. Transfers the 4'-phosphopantetheine moiety from coenzyme A to a Ser of acyl-carrier-protein. In Rhodopseudomonas palustris (strain BisA53), this protein is Holo-[acyl-carrier-protein] synthase.